The following is a 179-amino-acid chain: Large ribosomal subunit protein uL5 (179 aa).

It belongs to the universal ribosomal protein uL5 family. In terms of assembly, part of the 50S ribosomal subunit; part of the 5S rRNA/L5/L18/L25 subcomplex. Contacts the 5S rRNA and the P site tRNA. Forms a bridge to the 30S subunit in the 70S ribosome.

Functionally, this is one of the proteins that bind and probably mediate the attachment of the 5S RNA into the large ribosomal subunit, where it forms part of the central protuberance. In the 70S ribosome it contacts protein S13 of the 30S subunit (bridge B1b), connecting the 2 subunits; this bridge is implicated in subunit movement. Contacts the P site tRNA; the 5S rRNA and some of its associated proteins might help stabilize positioning of ribosome-bound tRNAs. In Pseudomonas aeruginosa (strain LESB58), this protein is Large ribosomal subunit protein uL5.